A 254-amino-acid chain; its full sequence is Mannose-binding protein (254 aa).

An N-terminal signal peptide occupies residues methionine 1 to alanine 19. Residues asparagine 46–arginine 99 are disordered. Residues arginine 51–glutamate 66 are compositionally biased toward basic and acidic residues. At proline 57 the chain carries 4-hydroxyproline. 2 positions are modified to 5-hydroxylysine: lysine 58 and lysine 61. Lysine 58 and lysine 61 each carry an O-linked (Gal...) hydroxylysine glycan. Position 75 is a 4-hydroxyproline (proline 75). 2 positions are modified to 5-hydroxylysine: lysine 93 and lysine 96. The C-type lectin domain maps to valine 140–isoleucine 250. 2 cysteine pairs are disulfide-bonded: cysteine 161-cysteine 252 and cysteine 229-cysteine 243.

As to quaternary structure, oligomeric complex of 3 or more homotrimers.

The protein localises to the secreted. Its function is as follows. Calcium-dependent lectin involved in innate immune defense. Binds mannose, fucose and N-acetylglucosamine on different microorganisms and activates the lectin complement pathway. The chain is Mannose-binding protein from Gallus gallus (Chicken).